The primary structure comprises 660 residues: MSSKVQQEIADLKKLIRKWDKEYYVDSLPSVEDFVYDKHILRLQELESKYPEYKTLDSPTLKFGSDLLNDFKEVEHSAPILSLDKVYDLDLLKSWIDKIDFNNSFNISVEPKIDGCSIVLYYKDGVLEKALTRGNGKFGNDVTINVRTIRYIPLFLDEKVDLVLRGEVYITKENFLKINKFLEKPYTNSRNLASGILRRVDSREVANFPLNIFIYDFLNAGLEFKTNDLATARLKKLGFKVNPLIRFFDLKNSIGEVLNYIADITKKRDSFEYEIDGVVLKVSDFALRERLGYTAHHPKWAMAYKFEALSGFSRVNSIVVQVGRSGKITPVANIDKVFVSGAFITSATLHNQDYIRSIGLNVGDVVKVSRRGDVIPAVEMVINKFSTGFFKVPDNCPACKTAVVKEGAHFFCPNNNCPSVAVERIKYFCSKNCMDIEGFSDKIISFLFEKKFIFSEIDLYTFDFYKLLEFKGFKDRKINNLINSIEASKKKPFSKLLLSMGIKDLGENTIRLLFLNNLNSFSKLFKLCQDRYFAFSTLLKIKGIGEKIALNIIEAFNDSVMLNKFKFFENLEFKMEEVVAIDGENKLLAGKKFCITGTFNGYSRSIIIDKLKNKGAIFNTCVTGSLDFLIVGEKAGSKLKKALSLNIKIMSFEDIKSYLD.

NAD(+) is bound by residues 33 to 37 (DFVYD), 82 to 83 (SL), and glutamate 110. Lysine 112 serves as the catalytic N6-AMP-lysine intermediate. NAD(+) contacts are provided by arginine 133, glutamate 167, lysine 281, and lysine 305. 4 residues coordinate Zn(2+): cysteine 396, cysteine 399, cysteine 412, and cysteine 417. Positions 583–660 (GENKLLAGKK…SFEDIKSYLD (78 aa)) constitute a BRCT domain.

It belongs to the NAD-dependent DNA ligase family. LigA subfamily. The cofactor is Mg(2+). Requires Mn(2+) as cofactor.

The catalysed reaction is NAD(+) + (deoxyribonucleotide)n-3'-hydroxyl + 5'-phospho-(deoxyribonucleotide)m = (deoxyribonucleotide)n+m + AMP + beta-nicotinamide D-nucleotide.. In terms of biological role, DNA ligase that catalyzes the formation of phosphodiester linkages between 5'-phosphoryl and 3'-hydroxyl groups in double-stranded DNA using NAD as a coenzyme and as the energy source for the reaction. It is essential for DNA replication and repair of damaged DNA. This is DNA ligase from Borreliella burgdorferi (strain ATCC 35210 / DSM 4680 / CIP 102532 / B31) (Borrelia burgdorferi).